The following is an 806-amino-acid chain: Transitional endoplasmic reticulum ATPase (806 aa).

Residue Ala-2 is modified to N-acetylalanine. Ser-3 and Ser-7 each carry phosphoserine. Residue Lys-8 forms a Glycyl lysine isopeptide (Lys-Gly) (interchain with G-Cter in SUMO2) linkage. Position 13 is a phosphoserine (Ser-13). Residue Lys-18 forms a Glycyl lysine isopeptide (Lys-Gly) (interchain with G-Cter in SUMO2) linkage. Ser-37 carries the post-translational modification Phosphoserine. 247–253 provides a ligand contact to ATP; that stretch reads PGTGKTL. Residue Lys-315 is modified to N6,N6,N6-trimethyllysine; by VCPKMT. 2 residues coordinate ATP: Asn-348 and His-384. The residue at position 436 (Thr-436) is a Phosphothreonine. Position 462 is a phosphoserine (Ser-462). An N6-acetyllysine mark is found at Lys-502 and Lys-505. 521–526 is a binding site for ATP; it reads GCGKTL. Lys-668 carries the N6-acetyllysine; alternate modification. Lys-668 bears the N6-succinyllysine; alternate mark. The residue at position 702 (Ser-702) is a Phosphoserine. The segment at 708-727 is disordered; the sequence is RRERERQTNPSAMEVEEDDP. Lys-754 carries the N6-acetyllysine modification. Residues 768–806 form a disordered region; it reads FGSFRFPSGNQGGAGPSQGSGGGTGGNVYTEDNDDDLYG. Ser-770, Ser-775, and Ser-787 each carry phosphoserine. The segment covering 777–793 has biased composition (gly residues); that stretch reads NQGGAGPSQGSGGGTGG. Positions 797–806 are interaction with UBXN6; the sequence is TEDNDDDLYG. The PIM motif motif lies at 802–806; that stretch reads DDLYG. Residue Tyr-805 is modified to Phosphotyrosine.

Belongs to the AAA ATPase family. In terms of assembly, homohexamer. Forms a ring-shaped particle of 12.5 nm diameter, that displays 6-fold radial symmetry. Part of a ternary complex containing STX5A, NSFL1C and VCP. NSFL1C forms a homotrimer that binds to one end of a VCP homohexamer. The complex binds to membranes enriched in phosphatidylethanolamine-containing lipids and promotes Golgi membrane fusion. Binds to a heterodimer of NPLOC4 and UFD1, binding to this heterodimer inhibits Golgi-membrane fusion. Interaction with VCIP135 leads to dissociation of the complex via ATP hydrolysis by VCP. Part of a ternary complex containing NPLOC4, UFD1 and VCP. Interacts with NSFL1C-like protein p37; the complex has membrane fusion activity and is required for Golgi and endoplasmic reticulum biogenesis. Interacts with SELENOS and SYVN1, as well as with DERL1 (via SHP-box motif), DERL2 and DERL3; which probably transfer misfolded proteins from the ER to VCP. Interacts with SVIP and DERL1. Component of a complex required to couple retrotranslocation, ubiquitination and deglycosylation composed of NGLY1, SAKS1, AMFR, VCP and RAD23B. Part of a complex composed of STUB1/CHIP, VCP/p97, CHRNA3, and UBXN2A that modulates the ubiquitination and endoplasmic reticulum-associated degradation (ERAD) of CHRNA3. Within the complex UBXN2A acts as a scaffold protein required for the interaction of CHRNA3 with VCP/p97, this interaction also inhibits CHRNA3 ubiquitination by STUB1/CHIP and subsequently ERAD. Interacts with UBXN2A (via UBX domain); the interaction is required for the interaction of CHRNA3 in the STUB1-VCP-UBXN2A complex. Directly interacts with UBXN4 and RNF19A. Interacts with CASR. Interacts with UBE4B and YOD1. Interacts with clathrin. Interacts with RNF103. Interacts with TRIM13 and TRIM21. Component of a VCP/p97-AMFR/gp78 complex that participates in the final step of the endoplasmic reticulum-associated degradation (ERAD) of HMGCR. Interacts directly with AMFR/gp78 (via its VIM). Interacts with RHBDD1 (via C-terminal domain). Interacts with SPRTN; leading to recruitment to stalled replication forks. Interacts with WASHC5. Interacts with UBOX5. Interacts (via N-terminus) with UBXN7, UBXN8, and probably several other UBX domain-containing proteins (via UBX domains); the interactions are mutually exclusive with VIM-dependent interactions such as those with AMFR and SELENOS. Forms a complex with UBQLN1 and UBXN4. Interacts (via the PIM motif) with RNF31 (via the PUB domain). Interacts with RIGI and RNF125; interaction takes place when RIGI is ubiquitinated via 'Lys-63'-linked ubiquitin on its CARD domains, leading to recruit RNF125 and promote ubiquitination and degradation of RIGI. Interacts with BAG6. Interacts with UBXN10. Interacts with UBXN6; the interaction with UBXN6 is direct and competitive with UFD1. Forms a ternary complex with CAV1 and UBXN6. Interacts with PLAA, UBXN6 and YOD1; may form a complex involved in macroautophagy. Interacts with ANKZF1. Interacts with ubiquitin-binding protein FAF1. Interacts with ZFAND2B (via VIM motif); the interaction is direct. Interacts with ZFAND1 (via its ubiquitin-like region); this interaction occurs in an arsenite-dependent manner. Interacts with CCDC47. Interacts with LMBR1L and UBAC2. Interacts with ATXN3. Interacts with TEX264; bridging VCP to covalent DNA-protein cross-links (DPCs). Post-translationally, ISGylated. In terms of processing, methylation at Lys-315 catalyzed by VCPKMT is increased in the presence of ASPSCR1. Lys-315 methylation may decrease ATPase activity. Phosphorylated by tyrosine kinases in response to T-cell antigen receptor activation. Phosphorylated in mitotic cells.

The protein resides in the cytoplasm. It is found in the cytosol. It localises to the endoplasmic reticulum. Its subcellular location is the nucleus. The protein localises to the stress granule. The catalysed reaction is ATP + H2O = ADP + phosphate + H(+). Functionally, necessary for the fragmentation of Golgi stacks during mitosis and for their reassembly after mitosis. Involved in the formation of the transitional endoplasmic reticulum (tER). The transfer of membranes from the endoplasmic reticulum to the Golgi apparatus occurs via 50-70 nm transition vesicles which derive from part-rough, part-smooth transitional elements of the endoplasmic reticulum (tER). Vesicle budding from the tER is an ATP-dependent process. The ternary complex containing UFD1, VCP and NPLOC4 binds ubiquitinated proteins and is necessary for the export of misfolded proteins from the ER to the cytoplasm, where they are degraded by the proteasome. The NPLOC4-UFD1-VCP complex regulates spindle disassembly at the end of mitosis and is necessary for the formation of a closed nuclear envelope. Regulates E3 ubiquitin-protein ligase activity of RNF19A. Component of the VCP/p97-AMFR/gp78 complex that participates in the final step of the sterol-mediated ubiquitination and endoplasmic reticulum-associated degradation (ERAD) of HMGCR. Mediates the endoplasmic reticulum-associated degradation of CHRNA3 in cortical neurons as part of the STUB1-VCP-UBXN2A complex. Involved in endoplasmic reticulum stress-induced pre-emptive quality control, a mechanism that selectively attenuates the translocation of newly synthesized proteins into the endoplasmic reticulum and reroutes them to the cytosol for proteasomal degradation. Involved in clearance process by mediating G3BP1 extraction from stress granules. Also involved in DNA damage response: recruited to double-strand breaks (DSBs) sites in a RNF8- and RNF168-dependent manner and promotes the recruitment of TP53BP1 at DNA damage sites. Recruited to stalled replication forks by SPRTN: may act by mediating extraction of DNA polymerase eta (POLH) to prevent excessive translesion DNA synthesis and limit the incidence of mutations induced by DNA damage. Together with SPRTN metalloprotease, involved in the repair of covalent DNA-protein cross-links (DPCs) during DNA synthesis. Involved in interstrand cross-link repair in response to replication stress by mediating unloading of the ubiquitinated CMG helicase complex. Mediates extraction of PARP1 trapped to chromatin: recognizes and binds ubiquitinated PARP1 and promotes its removal. Required for cytoplasmic retrotranslocation of stressed/damaged mitochondrial outer-membrane proteins and their subsequent proteasomal degradation. Essential for the maturation of ubiquitin-containing autophagosomes and the clearance of ubiquitinated protein by autophagy. Acts as a negative regulator of type I interferon production by interacting with RIGI: interaction takes place when RIGI is ubiquitinated via 'Lys-63'-linked ubiquitin on its CARD domains, leading to recruit RNF125 and promote ubiquitination and degradation of RIGI. May play a role in the ubiquitin-dependent sorting of membrane proteins to lysosomes where they undergo degradation. May more particularly play a role in caveolins sorting in cells. By controlling the steady-state expression of the IGF1R receptor, indirectly regulates the insulin-like growth factor receptor signaling pathway. The protein is Transitional endoplasmic reticulum ATPase (VCP) of Bos taurus (Bovine).